A 169-amino-acid polypeptide reads, in one-letter code: Cell division inhibitor SulA (169 aa).

Polar residues predominate over residues 1–13 (MFTSAHANRSAQA). Residues 1 to 26 (MFTSAHANRSAQASAPAGHYAHRSGE) form a disordered region. Residues 106 to 112 (ALRTGNY) form a ftsZ binding region. The segment at 162–169 (KIHSNLYH) is lon protease binding.

It belongs to the SulA family. As to quaternary structure, interacts with FtsZ. In terms of processing, is rapidly cleaved and degraded by the Lon protease once DNA damage is repaired.

In terms of biological role, component of the SOS system and an inhibitor of cell division. Accumulation of SulA causes rapid cessation of cell division and the appearance of long, non-septate filaments. In the presence of GTP, binds a polymerization-competent form of FtsZ in a 1:1 ratio, thus inhibiting FtsZ polymerization and therefore preventing it from participating in the assembly of the Z ring. This mechanism prevents the premature segregation of damaged DNA to daughter cells during cell division. This Klebsiella pneumoniae subsp. pneumoniae (strain ATCC 700721 / MGH 78578) protein is Cell division inhibitor SulA.